We begin with the raw amino-acid sequence, 269 residues long: BAG family molecular chaperone regulator 4 (269 aa).

A disordered region spans residues 1-40 (MMHNSTEESEWEVRPGGMLVQRRDDAASSDHKPLQDPDSA). Positions 21-35 (QRRDDAASSDHKPLQ) are enriched in basic and acidic residues. Residues 46 to 122 (QTIRITVSHG…LVVVVEDTNK (77 aa)) form the Ubiquitin-like domain. A BAG domain is found at 138–219 (AIAAVNAVTG…NLQEAVDKLK (82 aa)). Residues 241–269 (SFGNGVGSLNPPPPASPSANVTQDWEKFD) form a disordered region.

Binds to the ATPase domain of HSP70/HSC70 chaperones. Interacts with HSP70-1. In terms of tissue distribution, detected in stems, leaves, flowers and roots.

Its function is as follows. Co-chaperone that regulates diverse cellular pathways, such as programmed cell death and stress responses. In Arabidopsis thaliana (Mouse-ear cress), this protein is BAG family molecular chaperone regulator 4 (BAG4).